We begin with the raw amino-acid sequence, 172 residues long: uncharacterized protein (172 aa).

A disordered region spans residues 130 to 154; that stretch reads EQEKGAAPQEGKDWQVISEEDKKNQ.

This is an uncharacterized protein from Bacillus subtilis (strain 168).